The sequence spans 367 residues: Pyrimidine monooxygenase RutA (367 aa).

Residues 49-50 (IK), Asn-115, Glu-124, 140-141 (RY), and Ser-190 contribute to the FMN site.

It belongs to the NtaA/SnaA/DszA monooxygenase family. RutA subfamily.

The enzyme catalyses uracil + FMNH2 + NADH + O2 = (Z)-3-ureidoacrylate + FMN + NAD(+) + H2O + H(+). It carries out the reaction thymine + FMNH2 + NADH + O2 = (Z)-2-methylureidoacrylate + FMN + NAD(+) + H2O + H(+). Catalyzes the pyrimidine ring opening between N-3 and C-4 by an unusual flavin hydroperoxide-catalyzed mechanism, adding oxygen atoms in the process to yield ureidoacrylate peracid, that immediately reacts with FMN forming ureidoacrylate and FMN-N(5)-oxide. The FMN-N(5)-oxide reacts spontaneously with NADH to produce FMN. Requires the flavin reductase RutF to regenerate FMN in vivo. This Yersinia enterocolitica serotype O:8 / biotype 1B (strain NCTC 13174 / 8081) protein is Pyrimidine monooxygenase RutA.